The primary structure comprises 105 residues: Synaptic plasticity regulator PANTS (105 aa).

Belongs to the UPF0545 family. In terms of assembly, interacts with RTN4 isoform A/Nogo-A; the interaction results in enhanced RTN4-mediated inhibition of AMPA receptor clustering. Also interacts with NCAM1, RANBP2 and CCT8. Post-translationally, rapidly degraded by proteolysis following neuronal stimulation, resulting in increased AMPA receptor clustering.

It is found in the synapse. The protein resides in the synaptic cleft. Its function is as follows. Negatively regulates long-term potentiation and modulates adult synaptic plasticity. Stabilizes the interaction of RTN4 isoform A/Nogo-A with its receptors, inhibiting clustering of postsynaptic AMPA receptors at synaptic sites. Upon neuronal stimulation, degraded at synapses, reducing RTN4 signaling and allowing AMPA receptor clustering at individual synapses. This Homo sapiens (Human) protein is Synaptic plasticity regulator PANTS (C22orf39).